A 361-amino-acid polypeptide reads, in one-letter code: Nicotinate-nucleotide--dimethylbenzimidazole phosphoribosyltransferase (361 aa).

E315 serves as the catalytic Proton acceptor.

It belongs to the CobT family.

It catalyses the reaction 5,6-dimethylbenzimidazole + nicotinate beta-D-ribonucleotide = alpha-ribazole 5'-phosphate + nicotinate + H(+). It participates in nucleoside biosynthesis; alpha-ribazole biosynthesis; alpha-ribazole from 5,6-dimethylbenzimidazole: step 1/2. Its function is as follows. Catalyzes the synthesis of alpha-ribazole-5'-phosphate from nicotinate mononucleotide (NAMN) and 5,6-dimethylbenzimidazole (DMB). The chain is Nicotinate-nucleotide--dimethylbenzimidazole phosphoribosyltransferase from Clostridium perfringens (strain 13 / Type A).